The primary structure comprises 364 residues: Lipoyl synthase, mitochondrial (364 aa).

7 residues coordinate [4Fe-4S] cluster: cysteine 99, cysteine 104, cysteine 110, cysteine 130, cysteine 134, cysteine 137, and serine 345. The Radical SAM core domain occupies 116 to 334 (HSTQTATIML…EQRGNELGFL (219 aa)).

It belongs to the radical SAM superfamily. Lipoyl synthase family. Requires [4Fe-4S] cluster as cofactor.

It localises to the mitochondrion. It carries out the reaction [[Fe-S] cluster scaffold protein carrying a second [4Fe-4S](2+) cluster] + N(6)-octanoyl-L-lysyl-[protein] + 2 oxidized [2Fe-2S]-[ferredoxin] + 2 S-adenosyl-L-methionine + 4 H(+) = [[Fe-S] cluster scaffold protein] + N(6)-[(R)-dihydrolipoyl]-L-lysyl-[protein] + 4 Fe(3+) + 2 hydrogen sulfide + 2 5'-deoxyadenosine + 2 L-methionine + 2 reduced [2Fe-2S]-[ferredoxin]. It functions in the pathway protein modification; protein lipoylation via endogenous pathway; protein N(6)-(lipoyl)lysine from octanoyl-[acyl-carrier-protein]: step 2/2. Its function is as follows. Catalyzes the radical-mediated insertion of two sulfur atoms into the C-6 and C-8 positions of the octanoyl moiety bound to the lipoyl domains of lipoate-dependent enzymes, thereby converting the octanoylated domains into lipoylated derivatives. This chain is Lipoyl synthase, mitochondrial, found in Drosophila mojavensis (Fruit fly).